Consider the following 398-residue polypeptide: Acetate kinase (398 aa).

Residue N8 participates in Mg(2+) binding. K15 contributes to the ATP binding site. R89 is a binding site for substrate. D146 functions as the Proton donor/acceptor in the catalytic mechanism. Residues 206–210 (HIGNG), 283–285 (DMR), and 331–335 (GMGEN) contribute to the ATP site. E383 provides a ligand contact to Mg(2+).

Belongs to the acetokinase family. Homodimer. Mg(2+) serves as cofactor. Requires Mn(2+) as cofactor.

The protein resides in the cytoplasm. The catalysed reaction is acetate + ATP = acetyl phosphate + ADP. Its pathway is metabolic intermediate biosynthesis; acetyl-CoA biosynthesis; acetyl-CoA from acetate: step 1/2. Its function is as follows. Catalyzes the formation of acetyl phosphate from acetate and ATP. Can also catalyze the reverse reaction. The protein is Acetate kinase of Streptococcus pyogenes serotype M2 (strain MGAS10270).